Consider the following 972-residue polypeptide: Leucine--tRNA ligase (972 aa).

The short motif at 78–89 is the 'HIGH' region element; that stretch reads PYPSGDGLHVGH. Residues 741–745 carry the 'KMSKS' region motif; it reads KIGKS. Lys744 is an ATP binding site.

This sequence belongs to the class-I aminoacyl-tRNA synthetase family.

The protein resides in the cytoplasm. It catalyses the reaction tRNA(Leu) + L-leucine + ATP = L-leucyl-tRNA(Leu) + AMP + diphosphate. This is Leucine--tRNA ligase from Mycobacterium leprae (strain Br4923).